We begin with the raw amino-acid sequence, 200 residues long: Large ribosomal subunit protein bL25 (200 aa).

The tract at residues 1–20 is disordered; the sequence is MEARELKANVRKESGKEQAR.

This sequence belongs to the bacterial ribosomal protein bL25 family. CTC subfamily. As to quaternary structure, part of the 50S ribosomal subunit; part of the 5S rRNA/L5/L18/L25 subcomplex. Contacts the 5S rRNA. Binds to the 5S rRNA independently of L5 and L18.

This is one of the proteins that binds to the 5S RNA in the ribosome where it forms part of the central protuberance. This chain is Large ribosomal subunit protein bL25, found in Syntrophus aciditrophicus (strain SB).